The following is a 550-amino-acid chain: Putative pentatricopeptide repeat-containing protein At5g37570 (550 aa).

PPR repeat units lie at residues 73-107 (GTYLWNHLIKGYSNKFLFFETVSILMRMMRTGLAR), 109-143 (DEYTFPLVMKVCSNNGQVRVGSSVHGLVLRIGFDK), 144-174 (DVVVGTSFVDFYGKCKDLFSARKVFGEMPER), 175-205 (NAVSWTALVVAYVKSGELEEAKSMFDLMPER), 206-240 (NLGSWNALVDGLVKSGDLVNAKKLFDEMPKRDIIS), 241-267 (YTSMIDGYAKGGDMVSARDLFEEARGV), 268-302 (DVRAWSALILGYAQNGQPNEAFKVFSEMCAKNVKP), 303-333 (DEFIMVGLMSACSQMGCFELCEKVDSYLHQR), 339-369 (SHYVVPALIDMNAKCGHMDRAAKLFEEMPQR), 370-404 (DLVSYCSMMEGMAIHGCGSEAIRLFEKMVDEGIVP), 405-435 (DEVAFTVILKVCGQSRLVEEGLRYFELMRKK), and 441-475 (SPDHYSCIVNLLSRTGKLKEAYELIKSMPFEAHAS). Residues 476-550 (AWGSLLGGCS…KICGRSWISR (75 aa)) are type E motif.

It belongs to the PPR family. PCMP-E subfamily.

The protein is Putative pentatricopeptide repeat-containing protein At5g37570 (PCMP-E37) of Arabidopsis thaliana (Mouse-ear cress).